The primary structure comprises 266 residues: Single-stranded DNA-binding protein WHY1, chloroplastic (266 aa).

The N-terminal 37 residues, 1–37 (MPPPAPLFLSLASTPPPALMPVHHPRAPQSLTLVPPV), are a transit peptide targeting the chloroplast. A disordered region spans residues 53-81 (SPRHSDYFDPRAPPPPRGDGGYGRPPNGA). Residues 94–99 (KGKAAL) form a required for ssDNA binding region. The short motif at 172–185 (KGRSEEGKVRKVLK) is the Nuclear localization signal element.

The protein belongs to the Whirly family. Homotetramer.

Its subcellular location is the plastid. The protein localises to the chloroplast stroma. The protein resides in the nucleus. Its function is as follows. Single-stranded DNA and RNA binding protein that maintains plastid genome stability by preventing break-induced and short homology-dependent illegitimate recombinations. Functions in RNA metabolism and is involved in the maturation of the atpF and 23S ribosomal RNAs. This Zea mays (Maize) protein is Single-stranded DNA-binding protein WHY1, chloroplastic (WHY1).